The chain runs to 501 residues: Bifunctional purine biosynthesis protein PurH (501 aa).

Positions M1–S144 constitute an MGS-like domain.

The protein belongs to the PurH family.

It carries out the reaction (6R)-10-formyltetrahydrofolate + 5-amino-1-(5-phospho-beta-D-ribosyl)imidazole-4-carboxamide = 5-formamido-1-(5-phospho-D-ribosyl)imidazole-4-carboxamide + (6S)-5,6,7,8-tetrahydrofolate. It catalyses the reaction IMP + H2O = 5-formamido-1-(5-phospho-D-ribosyl)imidazole-4-carboxamide. It functions in the pathway purine metabolism; IMP biosynthesis via de novo pathway; 5-formamido-1-(5-phospho-D-ribosyl)imidazole-4-carboxamide from 5-amino-1-(5-phospho-D-ribosyl)imidazole-4-carboxamide (10-formyl THF route): step 1/1. Its pathway is purine metabolism; IMP biosynthesis via de novo pathway; IMP from 5-formamido-1-(5-phospho-D-ribosyl)imidazole-4-carboxamide: step 1/1. The sequence is that of Bifunctional purine biosynthesis protein PurH from Clostridium botulinum (strain Eklund 17B / Type B).